We begin with the raw amino-acid sequence, 189 residues long: Flavin prenyltransferase UbiX (189 aa).

FMN-binding positions include 10-12, S37, 88-91, and R123; these read GAS and SIKT. Residues Y153 and R169 each contribute to the dimethylallyl phosphate site.

The protein belongs to the UbiX/PAD1 family.

The enzyme catalyses dimethylallyl phosphate + FMNH2 = prenylated FMNH2 + phosphate. It participates in cofactor biosynthesis; ubiquinone biosynthesis. Functionally, flavin prenyltransferase that catalyzes the synthesis of the prenylated FMN cofactor (prenyl-FMN) for 4-hydroxy-3-polyprenylbenzoic acid decarboxylase UbiD. The prenyltransferase is metal-independent and links a dimethylallyl moiety from dimethylallyl monophosphate (DMAP) to the flavin N5 and C6 atoms of FMN. The protein is Flavin prenyltransferase UbiX of Salmonella typhi.